A 594-amino-acid chain; its full sequence is Glutamate decarboxylase 1 (594 aa).

The segment covering 1–13 (MASSTPSSSATSS) has biased composition (low complexity). The interval 1–23 (MASSTPSSSATSSNAGADPNTTN) is disordered. Residue Ser-78 is modified to Phosphoserine. 190-192 (QLS) contacts 4-aminobutanoate. Position 405 is an N6-(pyridoxal phosphate)lysine (Lys-405). Arg-567 serves as a coordination point for 4-aminobutanoate.

It belongs to the group II decarboxylase family. In terms of assembly, homodimer. Pyridoxal 5'-phosphate serves as cofactor.

The catalysed reaction is L-glutamate + H(+) = 4-aminobutanoate + CO2. Catalyzes the synthesis of the inhibitory neurotransmitter gamma-aminobutyric acid (GABA) with pyridoxal 5'-phosphate as cofactor. The sequence is that of Glutamate decarboxylase 1 (GAD1) from Felis catus (Cat).